A 125-amino-acid chain; its full sequence is Ribonuclease P protein component (125 aa).

The protein belongs to the RnpA family. In terms of assembly, consists of a catalytic RNA component (M1 or rnpB) and a protein subunit.

The enzyme catalyses Endonucleolytic cleavage of RNA, removing 5'-extranucleotides from tRNA precursor.. Functionally, RNaseP catalyzes the removal of the 5'-leader sequence from pre-tRNA to produce the mature 5'-terminus. It can also cleave other RNA substrates such as 4.5S RNA. The protein component plays an auxiliary but essential role in vivo by binding to the 5'-leader sequence and broadening the substrate specificity of the ribozyme. The sequence is that of Ribonuclease P protein component from Ruegeria pomeroyi (strain ATCC 700808 / DSM 15171 / DSS-3) (Silicibacter pomeroyi).